Consider the following 601-residue polypeptide: DNA ligase (601 aa).

D258 serves as a coordination point for ATP. K260 serves as the catalytic N6-AMP-lysine intermediate. R265, R280, E310, F350, R427, and K433 together coordinate ATP. The segment at 568-601 (DKSPEDATTTDEILEMYNKQPKKKIESPPIDESV) is disordered.

The protein belongs to the ATP-dependent DNA ligase family. It depends on Mg(2+) as a cofactor.

It catalyses the reaction ATP + (deoxyribonucleotide)n-3'-hydroxyl + 5'-phospho-(deoxyribonucleotide)m = (deoxyribonucleotide)n+m + AMP + diphosphate.. DNA ligase that seals nicks in double-stranded DNA during DNA replication, DNA recombination and DNA repair. The protein is DNA ligase of Saccharolobus islandicus (strain L.S.2.15 / Lassen #1) (Sulfolobus islandicus).